A 93-amino-acid chain; its full sequence is Cell division topological specificity factor (93 aa).

This sequence belongs to the MinE family.

Prevents the cell division inhibition by proteins MinC and MinD at internal division sites while permitting inhibition at polar sites. This ensures cell division at the proper site by restricting the formation of a division septum at the midpoint of the long axis of the cell. In Halorhodospira halophila (strain DSM 244 / SL1) (Ectothiorhodospira halophila (strain DSM 244 / SL1)), this protein is Cell division topological specificity factor.